Consider the following 370-residue polypeptide: Pantothenate kinase 3 (370 aa).

Catalysis depends on Glu138, which acts as the Proton acceptor. Acetyl-CoA-binding residues include Ser192, Ser195, and Arg207.

Belongs to the type II pantothenate kinase family. As to quaternary structure, homodimer.

Its subcellular location is the cytoplasm. It catalyses the reaction (R)-pantothenate + ATP = (R)-4'-phosphopantothenate + ADP + H(+). It functions in the pathway cofactor biosynthesis; coenzyme A biosynthesis; CoA from (R)-pantothenate: step 1/5. With respect to regulation, subject to allosteric regulation, exists in two distinct conformational states, a catalytically incompetent (or open) conformation stabilized by the binding of acetyl(acyl)-CoA, and a catalytically competent (or closed) conformation stabilized by ATP-binding. Inhibited by acetyl-CoA and its thioesters which act as allosteric inhibitors and compete with the ATP-binding site. Functionally, catalyzes the phosphorylation of pantothenate to generate 4'-phosphopantothenate in the first and rate-determining step of coenzyme A (CoA) synthesis. The polypeptide is Pantothenate kinase 3 (PANK3) (Bos taurus (Bovine)).